We begin with the raw amino-acid sequence, 413 residues long: N5-carboxyaminoimidazole ribonucleotide synthase (413 aa).

The tract at residues Met1–Gly21 is disordered. Residues Lys122, Lys162, Glu199–Val202, Glu207, and Asn289–Glu290 contribute to the ATP site. Positions Arg126–Met319 constitute an ATP-grasp domain.

This sequence belongs to the PurK/PurT family. In terms of assembly, homodimer.

The enzyme catalyses 5-amino-1-(5-phospho-beta-D-ribosyl)imidazole + hydrogencarbonate + ATP = 5-carboxyamino-1-(5-phospho-D-ribosyl)imidazole + ADP + phosphate + 2 H(+). It participates in purine metabolism; IMP biosynthesis via de novo pathway; 5-amino-1-(5-phospho-D-ribosyl)imidazole-4-carboxylate from 5-amino-1-(5-phospho-D-ribosyl)imidazole (N5-CAIR route): step 1/2. Its function is as follows. Catalyzes the ATP-dependent conversion of 5-aminoimidazole ribonucleotide (AIR) and HCO(3)(-) to N5-carboxyaminoimidazole ribonucleotide (N5-CAIR). The chain is N5-carboxyaminoimidazole ribonucleotide synthase from Corynebacterium ammoniagenes (Brevibacterium ammoniagenes).